A 458-amino-acid polypeptide reads, in one-letter code: MTFRKYFDCYDFYDRAKVGEKCTLDDWDLMKIPMKAMELKQKYGLDFKGEFIPTDKDMMEKLFKAGFEMLLECGIYCTDTHRIVKYTEDEIWDAINNVQKEFVLGTGRDAVNVRKRSVGDKAKPIVQGGPTGSPISEDVFMPVHMSYALEKEVDTIVNGVMTTVRGKAPIPKSPYEVLAAKTETRLIKNACAMAGRPGMGVOGPETSLSAQGNISADCAGGMTCTDSHEVSQLCELKIDLDAISVIAHYTANSDIIMDEQMPIFGGYAGGIEETTIVDVATHINAVLMSSASWHLDGPVHIRWGSTNTRETLMIAGWACATISEFTDILSGNQYYPCAGPCTEMCLLEASAQSITDTASGREILSGVASAKGVVTDKTTGMEARMMGEVARATAGVEISEVNVILDKLVALYEKNYASAPAGKTFQECYDVKTVTPTDEYMQVYDGARKKLEDLGLVF.

A non-standard amino acid (pyrrolysine) is located at residue Pyl-202.

This sequence belongs to the monomethylamine methyltransferase family. In terms of assembly, can form a complex with MtmC (MtmC1 or MtmC2).

It carries out the reaction Co(I)-[methylamine-specific corrinoid protein] + methylamine + H(+) = methyl-Co(III)-[methylamine-specific corrinoid protein] + NH4(+). Its pathway is one-carbon metabolism; methanogenesis from methylamine. Catalyzes the transfer of the methyl group from monomethylamine to the corrinoid cofactor of MtmC (MtmC1 or MtmC2). The sequence is that of Monomethylamine methyltransferase MtmB2 (mtmB2) from Methanosarcina barkeri.